The following is a 560-amino-acid chain: Terminal uridylyltransferase Tailor (560 aa).

Positions 169–197 (EQHPKPNPNNQPVQPHPTHQTKQEKKQAQ) are disordered. Over residues 176–188 (PNNQPVQPHPTHQ) the composition is skewed to low complexity. The Mg(2+) site is built by Asp-278 and Asp-280. The region spanning 455-522 (LRNFFAYFAK…VVQDPIQLNH (68 aa)) is the PAP-associated domain.

Mg(2+) serves as cofactor.

Its subcellular location is the cytoplasm. It catalyses the reaction RNA(n) + UTP = RNA(n)-3'-uridine ribonucleotide + diphosphate. Its function is as follows. Uridylyltransferase which mediates terminal uridylation of miRNAs, leading to their degradation. Has high specificity for splicing-derived miRNAs (mirtrons) and other miRNA substrates containing a 3'-G terminal nucleotide. Appears to be a major suppressor of mirtron biogenesis. In Drosophila melanogaster (Fruit fly), this protein is Terminal uridylyltransferase Tailor.